Reading from the N-terminus, the 502-residue chain is Histidine--tRNA ligase (502 aa).

Belongs to the class-II aminoacyl-tRNA synthetase family. In terms of assembly, homodimer.

It localises to the cytoplasm. It carries out the reaction tRNA(His) + L-histidine + ATP = L-histidyl-tRNA(His) + AMP + diphosphate + H(+). In Brucella abortus (strain S19), this protein is Histidine--tRNA ligase.